We begin with the raw amino-acid sequence, 490 residues long: GTPase Der (490 aa).

2 consecutive EngA-type G domains span residues 3 to 166 and 203 to 376; these read PVVA…MEDL and IKLA…DSST. GTP-binding positions include 9-16, 56-60, 118-121, 209-216, 256-260, and 321-324; these read GRPNVGKS, DTGGI, NKTD, DTAGV, and NKWD. In terms of domain architecture, KH-like spans 377 to 461; the sequence is RRVGTSMLTR…PIRIQFKEGE (85 aa).

The protein belongs to the TRAFAC class TrmE-Era-EngA-EngB-Septin-like GTPase superfamily. EngA (Der) GTPase family. In terms of assembly, associates with the 50S ribosomal subunit.

Its function is as follows. GTPase that plays an essential role in the late steps of ribosome biogenesis. This is GTPase Der from Escherichia coli O157:H7.